A 507-amino-acid chain; its full sequence is Arabinose import ATP-binding protein AraG (507 aa).

2 consecutive ABC transporter domains span residues 14-249 (LRFN…MVGR) and 249-505 (RDIQ…LPRT). Residue 46-53 (GENGAGKS) participates in ATP binding.

The protein belongs to the ABC transporter superfamily. Arabinose importer (TC 3.A.1.2.2) family. The complex is composed of two ATP-binding proteins (AraG), two transmembrane proteins (AraH) and a solute-binding protein (AraF).

It is found in the cell inner membrane. It carries out the reaction L-arabinose(out) + ATP + H2O = L-arabinose(in) + ADP + phosphate + H(+). Its function is as follows. Part of the ABC transporter complex AraFGH involved in arabinose import. Responsible for energy coupling to the transport system. This chain is Arabinose import ATP-binding protein AraG, found in Pseudomonas syringae pv. tomato (strain ATCC BAA-871 / DC3000).